We begin with the raw amino-acid sequence, 643 residues long: Threonine--tRNA ligase (643 aa).

Positions 1-61 (MIKITLKDGS…NEDSSLEICT (61 aa)) constitute a TGS domain. Residues 240 to 540 (DHNKLGRELG…LIEKYAGALP (301 aa)) form a catalytic region. C335, H386, and H517 together coordinate Zn(2+).

Belongs to the class-II aminoacyl-tRNA synthetase family. As to quaternary structure, homodimer. Zn(2+) serves as cofactor.

The protein localises to the cytoplasm. It carries out the reaction tRNA(Thr) + L-threonine + ATP = L-threonyl-tRNA(Thr) + AMP + diphosphate + H(+). Its function is as follows. Catalyzes the attachment of threonine to tRNA(Thr) in a two-step reaction: L-threonine is first activated by ATP to form Thr-AMP and then transferred to the acceptor end of tRNA(Thr). Also edits incorrectly charged L-seryl-tRNA(Thr). This is Threonine--tRNA ligase from Clostridium perfringens (strain ATCC 13124 / DSM 756 / JCM 1290 / NCIMB 6125 / NCTC 8237 / Type A).